A 229-amino-acid polypeptide reads, in one-letter code: Ras-related protein RabZ (229 aa).

A disordered region spans residues 1–39; sequence MGCFHSREPTATGKTKKEEPTSAVKTNKEEKSSNYVSEP. Glycine 2 carries N-myristoyl glycine lipidation. Residue cysteine 3 is the site of S-palmitoyl cysteine attachment. The span at 15–32 shows a compositional bias: basic and acidic residues; the sequence is TKKEEPTSAVKTNKEEKS. 57–64 serves as a coordination point for GTP; that stretch reads GDQATGKS. Residues 79 to 88 carry the Effector region motif; it reads HKPSPIIIDC. GTP contacts are provided by residues 106–110 and 164–167; these read DTAGQ and NKCD.

It belongs to the small GTPase superfamily. Rab family. Although this sequence lacks the C-terminal cysteine motifs subject to isoprenylation in other Rab proteins, it does have N-terminal myristoylation and S-palmitoylation sequence motifs.

The polypeptide is Ras-related protein RabZ (rabZ) (Dictyostelium discoideum (Social amoeba)).